The chain runs to 399 residues: Argininosuccinate synthase (399 aa).

ATP-binding positions include alanine 8–serine 16 and alanine 35. Position 87 (tyrosine 87) interacts with L-citrulline. Position 117 (glycine 117) interacts with ATP. The L-aspartate site is built by threonine 119, asparagine 123, and aspartate 124. Residue asparagine 123 participates in L-citrulline binding. L-citrulline-binding residues include arginine 127, serine 176, serine 185, glutamate 261, and tyrosine 273.

This sequence belongs to the argininosuccinate synthase family. Type 1 subfamily. In terms of assembly, homotetramer.

The protein localises to the cytoplasm. It catalyses the reaction L-citrulline + L-aspartate + ATP = 2-(N(omega)-L-arginino)succinate + AMP + diphosphate + H(+). The protein operates within amino-acid biosynthesis; L-arginine biosynthesis; L-arginine from L-ornithine and carbamoyl phosphate: step 2/3. The polypeptide is Argininosuccinate synthase (Buchnera aphidicola subsp. Cinara cedri (strain Cc)).